A 422-amino-acid polypeptide reads, in one-letter code: UDP-N-acetylglucosamine 1-carboxyvinyltransferase (422 aa).

A phosphoenolpyruvate-binding site is contributed by 22 to 23 (KN). Position 94 (Arg94) interacts with UDP-N-acetyl-alpha-D-glucosamine. Cys118 serves as the catalytic Proton donor. The residue at position 118 (Cys118) is a 2-(S-cysteinyl)pyruvic acid O-phosphothioketal. UDP-N-acetyl-alpha-D-glucosamine contacts are provided by residues 123 to 127 (RPVDL), Asp308, and Ile330.

This sequence belongs to the EPSP synthase family. MurA subfamily.

Its subcellular location is the cytoplasm. It catalyses the reaction phosphoenolpyruvate + UDP-N-acetyl-alpha-D-glucosamine = UDP-N-acetyl-3-O-(1-carboxyvinyl)-alpha-D-glucosamine + phosphate. It functions in the pathway cell wall biogenesis; peptidoglycan biosynthesis. Cell wall formation. Adds enolpyruvyl to UDP-N-acetylglucosamine. The polypeptide is UDP-N-acetylglucosamine 1-carboxyvinyltransferase (Dinoroseobacter shibae (strain DSM 16493 / NCIMB 14021 / DFL 12)).